A 181-amino-acid polypeptide reads, in one-letter code: MMILVTGGARSGKSRHAEALIGDAPQVLYIATSQILDDEMAARIQHHKDGRPAHWRTAECWRHLDTLITADLAPDDAILLECITTMVTNLLFALGGENDPEQWDYAAMERAIDDEIQILIAACQRCPAKVVLVTNEVGMGIVPENRLARHFRDIAGRVNQRLAAAADEVWLVVSGIGVKIK.

Residues 7-14 (GGARSGKS) and 31-33 (ATS) each bind GTP. Histidine 47 serves as the catalytic GMP-histidine intermediate. GTP contacts are provided by residues 48–51 (KDGR), glutamate 59, and glutamate 81.

This sequence belongs to the CobU/CobP family. As to quaternary structure, homotrimer.

It carries out the reaction adenosylcob(III)inamide + GTP = adenosylcob(III)inamide phosphate + GDP + H(+). The enzyme catalyses adenosylcob(III)inamide + ATP = adenosylcob(III)inamide phosphate + ADP + H(+). The catalysed reaction is adenosylcob(III)inamide phosphate + GTP + H(+) = adenosylcob(III)inamide-GDP + diphosphate. It participates in cofactor biosynthesis; adenosylcobalamin biosynthesis; adenosylcobalamin from cob(II)yrinate a,c-diamide: step 5/7. It functions in the pathway cofactor biosynthesis; adenosylcobalamin biosynthesis; adenosylcobalamin from cob(II)yrinate a,c-diamide: step 6/7. Catalyzes ATP-dependent phosphorylation of adenosylcobinamide and addition of GMP to adenosylcobinamide phosphate. The protein is Bifunctional adenosylcobalamin biosynthesis protein CobU (cobU) of Salmonella typhimurium (strain LT2 / SGSC1412 / ATCC 700720).